A 205-amino-acid polypeptide reads, in one-letter code: Probable thymidylate kinase (205 aa).

An ATP-binding site is contributed by 10–17 (GIDGSGKT).

Belongs to the thymidylate kinase family.

The enzyme catalyses dTMP + ATP = dTDP + ADP. This is Probable thymidylate kinase (tmk) from Pyrococcus horikoshii (strain ATCC 700860 / DSM 12428 / JCM 9974 / NBRC 100139 / OT-3).